A 411-amino-acid chain; its full sequence is Receptor GIN3 (411 aa).

The Extracellular portion of the chain corresponds to 1–99; that stretch reads MSGFVAGEEA…LLPILPHPRN (99 aa). The helical transmembrane segment at 100 to 120 threads the bilayer; the sequence is IPIIVPLFCVFTVMTSLAVGL. Topologically, residues 121–134 are cytoplasmic; that stretch reads RLWSRQKVAGGIRS. A helical transmembrane segment spans residues 135–155; it reads FDWLALAGFGLTIIYGAVSVY. Residues 156-181 lie on the Extracellular side of the membrane; the sequence is HSKVSGPYQAFYDRTWDQMKENYKVY. The chain crosses the membrane as a helical span at residues 182–202; that stretch reads LVLTIMYPFIMGLIKISLLLF. Residues 203 to 227 lie on the Cytoplasmic side of the membrane; the sequence is YYRVATLNYVQWAVYATGSLTIANS. A helical membrane pass occupies residues 228 to 248; it reads IAAIITHCLAFMPIDFWNHFL. At 249–262 the chain is on the extracellular side; that stretch reads QSPFKFNSRTPMLV. The chain crosses the membrane as a helical span at residues 263-283; that stretch reads FGAVYILTDVAILIIPMPMVF. Residues 284-292 are Cytoplasmic-facing; it reads QLKLYPREK. Residues 293–313 form a helical membrane-spanning segment; sequence VIAVIAFSLGGVACVASGFRI. The Extracellular portion of the chain corresponds to 314-328; that stretch reads WAIDEFQNYSGKNSS. N-linked (GlcNAc...) asparagine glycosylation is found at Asn-321 and Asn-326. Residues 329–349 traverse the membrane as a helical segment; the sequence is GLMIDAWTMIELNLTLICASA. At 350–411 the chain is on the cytoplasmic side; sequence PAIRALAIHY…QSPVIPKEVV (62 aa). The tract at residues 371 to 411 is disordered; that stretch reads FSSSGATRGSKSAGSSGKSKTPESEKSMQVSQSPVIPKEVV. Positions 372 to 389 are enriched in low complexity; it reads SSSGATRGSKSAGSSGKS.

The protein belongs to the SAT4 family. Interacts with guanine nucleotide-binding protein alpha GPA2; to activate adenylate cyclase and positively regulate nematode trap formation.

It is found in the cell membrane. Receptor that senses nematode-derived signals at the cell surface and signals via adenylate cyclase to positively regulate trap formation for nematode capture. This Arthrobotrys oligospora (strain ATCC 24927 / CBS 115.81 / DSM 1491) (Nematode-trapping fungus) protein is Receptor GIN3.